A 147-amino-acid polypeptide reads, in one-letter code: Large ribosomal subunit protein bL9 (147 aa).

Belongs to the bacterial ribosomal protein bL9 family.

Functionally, binds to the 23S rRNA. The chain is Large ribosomal subunit protein bL9 from Campylobacter lari (strain RM2100 / D67 / ATCC BAA-1060).